Reading from the N-terminus, the 79-residue chain is Translational regulator CsrA (79 aa).

This sequence belongs to the CsrA/RsmA family. As to quaternary structure, homodimer; the beta-strands of each monomer intercalate to form a hydrophobic core, while the alpha-helices form wings that extend away from the core.

The protein resides in the cytoplasm. Its function is as follows. A translational regulator that binds mRNA to regulate translation initiation and/or mRNA stability. Usually binds in the 5'-UTR at or near the Shine-Dalgarno sequence preventing ribosome-binding, thus repressing translation. Its main target seems to be the major flagellin gene, while its function is anatagonized by FliW. In Geobacter sulfurreducens (strain ATCC 51573 / DSM 12127 / PCA), this protein is Translational regulator CsrA.